Consider the following 870-residue polypeptide: Elastin (870 aa).

Positions 1–27 (MAGLTAAVPQPGVLLILLLNLLHPAQP) are cleaved as a signal peptide. Pro-39 and Pro-75 each carry 4-hydroxyproline. Pro-87 carries the hydroxyproline modification. Pro-105 carries the post-translational modification 4-hydroxyproline. Allysine is present on residues Lys-122 and Lys-126. Pro-207, Pro-220, Pro-223, and Pro-244 each carry 4-hydroxyproline. Residues Lys-290 and Lys-309 each carry the allysine modification. Position 338 is a 4-hydroxyproline (Pro-338). Lys-360 and Lys-363 each carry allysine. Pro-375 is modified (hydroxyproline). 4-hydroxyproline is present on residues Pro-402 and Pro-408. Hydroxyproline occurs at positions 413 and 418. 5 positions are modified to allysine: Lys-434, Lys-438, Lys-441, Lys-485, and Lys-488. A 4-hydroxyproline mark is found at Pro-518 and Pro-539. Lys-554, Lys-558, Lys-615, Lys-619, and Lys-623 each carry allysine. 4-hydroxyproline occurs at positions 637, 646, 662, and 670. Lys-677 and Lys-680 each carry allysine. Pro-715 carries the 4-hydroxyproline modification. 4 positions are modified to allysine: Lys-730, Lys-734, Lys-793, and Lys-796. At Pro-842 the chain carries 4-hydroxyproline. Cys-860 and Cys-865 are joined by a disulfide.

It belongs to the elastin family. In terms of assembly, the polymeric elastin chains are cross-linked together into an extensible 3D network. Forms a ternary complex with BGN and MFAP2. Interacts with MFAP2 via divalent cations (calcium &gt; magnesium &gt; manganese) in a dose-dependent and saturating manner. Interacts with FBLN5 and FBN1. Forms a ternary complex with FBN1 and FBLN2 or FBLN5. Interacts with MFAP4 in a Ca (2+)-dependent manner; this interaction promotes ELN self-assembly. Interacts with EFEMP2 with moderate affinity. Post-translationally, elastin is formed through the cross-linking of its soluble precursor tropoelastin. Cross-linking is initiated through the action of lysyl oxidase on exposed lysines to form allysine. Subsequent spontaneous condensation reactions with other allysine or unmodified lysine residues result in various bi-, tri-, and tetrafunctional cross-links. The most abundant cross-links in mature elastin fibers are lysinonorleucine, allysine aldol, desmosine, and isodesmosine. In terms of processing, hydroxylation on proline residues within the sequence motif, GXPG, is most likely to be 4-hydroxy as this fits the requirement for 4-hydroxylation in vertebrates.

The protein resides in the secreted. The protein localises to the extracellular space. It localises to the extracellular matrix. Its function is as follows. Major structural protein of tissues such as aorta and nuchal ligament, which must expand rapidly and recover completely. Molecular determinant of the late arterial morphogenesis, stabilizing arterial structure by regulating proliferation and organization of vascular smooth muscle. The sequence is that of Elastin (Eln) from Rattus norvegicus (Rat).